The chain runs to 361 residues: Phospho-N-acetylmuramoyl-pentapeptide-transferase (361 aa).

A run of 10 helical transmembrane segments spans residues Thr-25–Asn-45, Thr-72–Ala-92, Val-95–Tyr-115, Thr-133–Gly-153, Val-169–Gly-189, Gly-200–Ala-220, Leu-240–Pro-260, Ile-264–Ala-284, Ile-289–Val-309, and Gln-338–Leu-358.

It belongs to the glycosyltransferase 4 family. MraY subfamily. Mg(2+) serves as cofactor.

The protein resides in the cell inner membrane. It carries out the reaction UDP-N-acetyl-alpha-D-muramoyl-L-alanyl-gamma-D-glutamyl-meso-2,6-diaminopimeloyl-D-alanyl-D-alanine + di-trans,octa-cis-undecaprenyl phosphate = di-trans,octa-cis-undecaprenyl diphospho-N-acetyl-alpha-D-muramoyl-L-alanyl-D-glutamyl-meso-2,6-diaminopimeloyl-D-alanyl-D-alanine + UMP. Its pathway is cell wall biogenesis; peptidoglycan biosynthesis. In terms of biological role, catalyzes the initial step of the lipid cycle reactions in the biosynthesis of the cell wall peptidoglycan: transfers peptidoglycan precursor phospho-MurNAc-pentapeptide from UDP-MurNAc-pentapeptide onto the lipid carrier undecaprenyl phosphate, yielding undecaprenyl-pyrophosphoryl-MurNAc-pentapeptide, known as lipid I. In Rhodopseudomonas palustris (strain BisB5), this protein is Phospho-N-acetylmuramoyl-pentapeptide-transferase.